We begin with the raw amino-acid sequence, 669 residues long: Alpha-1,6-mannosylglycoprotein 6-beta-N-acetylglucosaminyltransferase (669 aa).

Topologically, residues Met-1–Cys-7 are cytoplasmic. The chain crosses the membrane as a helical; Signal-anchor for type II membrane protein span at residues Val-8–Ile-28. At Ser-29–Leu-669 the chain is on the lumenal side. Asn-30, Asn-412, Asn-437, and Asn-626 each carry an N-linked (GlcNAc...) asparagine glycan.

It belongs to the glycosyltransferase 18 family. Expressed in a complex subset of neurons in larvae and in the spermathecal and pharyngeal-intestinal valves and certain vulval cells of adults.

Its subcellular location is the golgi apparatus membrane. It carries out the reaction N(4)-{beta-D-GlcNAc-(1-&gt;2)-[beta-D-GlcNAc-(1-&gt;4)]-alpha-D-Man-(1-&gt;3)-[beta-D-GlcNAc-(1-&gt;2)-alpha-D-Man-(1-&gt;6)]-beta-D-Man-(1-&gt;4)-beta-D-GlcNAc-(1-&gt;4)-beta-D-GlcNAc}-L-asparaginyl-[protein] + UDP-N-acetyl-alpha-D-glucosamine = N(4)-{beta-D-GlcNAc-(1-&gt;2)-[beta-D-GlcNAc-(1-&gt;4)]-alpha-D-Man-(1-&gt;3)-[beta-D-GlcNAc-(1-&gt;2)-[beta-D-GlcNAc-(1-&gt;6)]-alpha-D-Man-(1-&gt;6)]-beta-D-Man-(1-&gt;4)-beta-D-GlcNAc-(1-&gt;4)-beta-D-GlcNAc}-L-asparaginyl-[protein] + UDP + H(+). Its pathway is protein modification; protein glycosylation. Its function is as follows. Catalyzes the addition of N-acetylglucosamine (GlcNAc) in beta 1-6 linkage to the alpha-linked mannose of biantennary N-linked oligosaccharides. The polypeptide is Alpha-1,6-mannosylglycoprotein 6-beta-N-acetylglucosaminyltransferase (gly-2) (Caenorhabditis elegans).